The chain runs to 200 residues: Dephospho-CoA kinase (200 aa).

Positions 4–200 (TIGLTGSVAT…TFIERFVKNK (197 aa)) constitute a DPCK domain. ATP is bound at residue 12 to 17 (ATGKST).

Belongs to the CoaE family.

It is found in the cytoplasm. It carries out the reaction 3'-dephospho-CoA + ATP = ADP + CoA + H(+). Its pathway is cofactor biosynthesis; coenzyme A biosynthesis; CoA from (R)-pantothenate: step 5/5. Functionally, catalyzes the phosphorylation of the 3'-hydroxyl group of dephosphocoenzyme A to form coenzyme A. The sequence is that of Dephospho-CoA kinase from Listeria monocytogenes serovar 1/2a (strain ATCC BAA-679 / EGD-e).